Reading from the N-terminus, the 430-residue chain is Adenylosuccinate synthetase (430 aa).

GTP is bound by residues 12–18 (GDEGKGK) and 40–42 (GHT). Aspartate 13 (proton acceptor) is an active-site residue. Mg(2+) is bound by residues aspartate 13 and glycine 40. Residues 13–16 (DEGK), 38–41 (NAGH), threonine 128, arginine 142, glutamine 223, threonine 238, and arginine 302 each bind IMP. The active-site Proton donor is the histidine 41. 298–304 (TVTKRPR) contacts substrate. GTP-binding positions include arginine 304, 330–332 (CVD), and 412–414 (SVG).

Belongs to the adenylosuccinate synthetase family. As to quaternary structure, homodimer. It depends on Mg(2+) as a cofactor.

It is found in the cytoplasm. The enzyme catalyses IMP + L-aspartate + GTP = N(6)-(1,2-dicarboxyethyl)-AMP + GDP + phosphate + 2 H(+). The protein operates within purine metabolism; AMP biosynthesis via de novo pathway; AMP from IMP: step 1/2. Its function is as follows. Plays an important role in the de novo pathway of purine nucleotide biosynthesis. Catalyzes the first committed step in the biosynthesis of AMP from IMP. The polypeptide is Adenylosuccinate synthetase (Ligilactobacillus salivarius (strain UCC118) (Lactobacillus salivarius)).